An 858-amino-acid polypeptide reads, in one-letter code: Elongation factor 2 (858 aa).

Positions 17–362 (ANIRNMSVIA…MITIHLPSPV (346 aa)) constitute a tr-type G domain. Residue 26-33 (AHVDHGKS) participates in GTP binding. Phosphothreonine occurs at positions 57 and 59. Residues 158–161 (NKMD) and 216–218 (SGL) contribute to the GTP site. H715 is subject to Diphthamide.

This sequence belongs to the TRAFAC class translation factor GTPase superfamily. Classic translation factor GTPase family. EF-G/EF-2 subfamily. Binds to 80S ribosomes. Actively translating ribosomes show mutually exclusive binding of eIF5a (EIF5A or EIF5A2) and EEF2/eEF2. Interacts with SERBP1; interaction sequesters EEF2/eEF2 at the A-site of the ribosome, thereby blocking the interaction sites of the mRNA-tRNA complex, promoting ribosome stabilization and hibernation. Interacts with HABP4; interaction takes place at the A-site of hibernating ribosomes and promotes ribosome stabilization. In terms of processing, phosphorylation by EF-2 kinase completely inactivates EF-2. Post-translationally, diphthamide is 2-[3-carboxyamido-3-(trimethyl-ammonio)propyl]histidine.

Its subcellular location is the cytoplasm. The protein localises to the nucleus. The catalysed reaction is GTP + H2O = GDP + phosphate + H(+). Catalyzes the GTP-dependent ribosomal translocation step during translation elongation. During this step, the ribosome changes from the pre-translocational (PRE) to the post-translocational (POST) state as the newly formed A-site-bound peptidyl-tRNA and P-site-bound deacylated tRNA move to the P and E sites, respectively. Catalyzes the coordinated movement of the two tRNA molecules, the mRNA and conformational changes in the ribosome. The chain is Elongation factor 2 (EEF2) from Gallus gallus (Chicken).